We begin with the raw amino-acid sequence, 57 residues long: Large ribosomal subunit protein bL32c (57 aa).

The protein belongs to the bacterial ribosomal protein bL32 family.

It localises to the plastid. Its subcellular location is the chloroplast. This is Large ribosomal subunit protein bL32c from Drimys granadensis.